Reading from the N-terminus, the 417-residue chain is Serine hydroxymethyltransferase 3 (417 aa).

Residues Leu-121 and 125–127 (GHL) contribute to the (6S)-5,6,7,8-tetrahydrofolate site. At Lys-229 the chain carries N6-(pyridoxal phosphate)lysine. 354–356 (SPF) contributes to the (6S)-5,6,7,8-tetrahydrofolate binding site.

This sequence belongs to the SHMT family. In terms of assembly, homodimer. Pyridoxal 5'-phosphate is required as a cofactor.

It is found in the cytoplasm. It carries out the reaction (6R)-5,10-methylene-5,6,7,8-tetrahydrofolate + glycine + H2O = (6S)-5,6,7,8-tetrahydrofolate + L-serine. Its pathway is one-carbon metabolism; tetrahydrofolate interconversion. The protein operates within amino-acid biosynthesis; glycine biosynthesis; glycine from L-serine: step 1/1. Its function is as follows. Catalyzes the reversible interconversion of serine and glycine with tetrahydrofolate (THF) serving as the one-carbon carrier. This reaction serves as the major source of one-carbon groups required for the biosynthesis of purines, thymidylate, methionine, and other important biomolecules. Also exhibits THF-independent aldolase activity toward beta-hydroxyamino acids, producing glycine and aldehydes, via a retro-aldol mechanism. In Pseudomonas aeruginosa (strain ATCC 15692 / DSM 22644 / CIP 104116 / JCM 14847 / LMG 12228 / 1C / PRS 101 / PAO1), this protein is Serine hydroxymethyltransferase 3.